We begin with the raw amino-acid sequence, 382 residues long: Queuine tRNA-ribosyltransferase (382 aa).

Asp-93 acts as the Proton acceptor in catalysis. Substrate is bound by residues 93–97 (DSGGF), Asp-147, Gln-191, and Gly-218. The tract at residues 249–255 (GVGKPED) is RNA binding. Catalysis depends on Asp-268, which acts as the Nucleophile. Residues 273–277 (TRNAR) form an RNA binding; important for wobble base 34 recognition region. Residues Cys-306, Cys-308, Cys-311, and His-337 each coordinate Zn(2+).

Belongs to the queuine tRNA-ribosyltransferase family. Homodimer. Within each dimer, one monomer is responsible for RNA recognition and catalysis, while the other monomer binds to the replacement base PreQ1. Zn(2+) is required as a cofactor.

The catalysed reaction is 7-aminomethyl-7-carbaguanine + guanosine(34) in tRNA = 7-aminomethyl-7-carbaguanosine(34) in tRNA + guanine. It functions in the pathway tRNA modification; tRNA-queuosine biosynthesis. Its function is as follows. Catalyzes the base-exchange of a guanine (G) residue with the queuine precursor 7-aminomethyl-7-deazaguanine (PreQ1) at position 34 (anticodon wobble position) in tRNAs with GU(N) anticodons (tRNA-Asp, -Asn, -His and -Tyr). Catalysis occurs through a double-displacement mechanism. The nucleophile active site attacks the C1' of nucleotide 34 to detach the guanine base from the RNA, forming a covalent enzyme-RNA intermediate. The proton acceptor active site deprotonates the incoming PreQ1, allowing a nucleophilic attack on the C1' of the ribose to form the product. After dissociation, two additional enzymatic reactions on the tRNA convert PreQ1 to queuine (Q), resulting in the hypermodified nucleoside queuosine (7-(((4,5-cis-dihydroxy-2-cyclopenten-1-yl)amino)methyl)-7-deazaguanosine). In Haemophilus influenzae (strain PittEE), this protein is Queuine tRNA-ribosyltransferase.